The following is a 486-amino-acid chain: ATP-dependent rRNA helicase rrp3 (486 aa).

The segment at 1-60 is disordered; it reads MSSVKRRKTDKNPSLEGLKSKKTKESKKESHTPSPEPIEDTEDNRVIEETEEAEEDDAPK. The short motif at 60 to 88 is the Q motif element; sequence KSFKDLGIVDSLCEACDTLGYKAPTPIQR. Positions 91–262 constitute a Helicase ATP-binding domain; sequence IPLALQGRDL…RASLKDPLRV (172 aa). 104–111 is an ATP binding site; the sequence is AETGSGKT. The short motif at 210-213 is the DEAD box element; sequence DEAD. The Helicase C-terminal domain maps to 286 to 434; sequence HKDTYLIYLL…EYPTVKDEVM (149 aa). 2 stretches are compositionally biased toward basic and acidic residues: residues 447 to 460 and 476 to 486; these read ARNEMKNLHEDRGK and RGRDEMDREEG. A disordered region spans residues 447-486; it reads ARNEMKNLHEDRGKKGAVLKGRRPANGAKRGRDEMDREEG.

It belongs to the DEAD box helicase family. DDX47/RRP3 subfamily. Interacts with the SSU processome.

It is found in the nucleus. The enzyme catalyses ATP + H2O = ADP + phosphate + H(+). Its function is as follows. ATP-dependent rRNA helicase required for pre-ribosomal RNA processing. Involved in the maturation of the 35S-pre-rRNA and to its cleavage to mature 18S rRNA. This is ATP-dependent rRNA helicase rrp3 from Botryotinia fuckeliana (strain B05.10) (Noble rot fungus).